A 186-amino-acid chain; its full sequence is Tumor necrosis factor, alpha-induced protein 8-like protein 2 A (186 aa).

The protein belongs to the TNFAIP8 family. TNFAIP8L2 subfamily.

Acts as a negative regulator of innate and adaptive immunity by maintaining immune homeostasis. Negative regulator of Toll-like receptor and T-cell receptor function. Prevents hyperresponsiveness of the immune system and maintains immune homeostasis. Inhibits jun/ap1 and NF-kappa-B activation. Promotes Fas-induced apoptosis. This is Tumor necrosis factor, alpha-induced protein 8-like protein 2 A (tnfaip8l2a) from Danio rerio (Zebrafish).